The following is a 121-amino-acid chain: Putative iron-sulfur cluster insertion protein ErpA 1 (121 aa).

Positions 49, 113, and 115 each coordinate iron-sulfur cluster.

The protein belongs to the HesB/IscA family. Homodimer. Iron-sulfur cluster is required as a cofactor.

Its function is as follows. Required for insertion of 4Fe-4S clusters. This Polaromonas naphthalenivorans (strain CJ2) protein is Putative iron-sulfur cluster insertion protein ErpA 1.